Consider the following 158-residue polypeptide: NADH-quinone oxidoreductase subunit B (158 aa).

Residues C36, C37, C101, and C131 each contribute to the [4Fe-4S] cluster site.

This sequence belongs to the complex I 20 kDa subunit family. In terms of assembly, NDH-1 is composed of 14 different subunits. Subunits NuoB, C, D, E, F, and G constitute the peripheral sector of the complex. [4Fe-4S] cluster is required as a cofactor.

It is found in the cell inner membrane. It catalyses the reaction a quinone + NADH + 5 H(+)(in) = a quinol + NAD(+) + 4 H(+)(out). Its function is as follows. NDH-1 shuttles electrons from NADH, via FMN and iron-sulfur (Fe-S) centers, to quinones in the respiratory chain. The immediate electron acceptor for the enzyme in this species is believed to be ubiquinone. Couples the redox reaction to proton translocation (for every two electrons transferred, four hydrogen ions are translocated across the cytoplasmic membrane), and thus conserves the redox energy in a proton gradient. This is NADH-quinone oxidoreductase subunit B from Francisella tularensis subsp. tularensis (strain FSC 198).